We begin with the raw amino-acid sequence, 117 residues long: Large ribosomal subunit protein bL20 (117 aa).

It belongs to the bacterial ribosomal protein bL20 family.

Binds directly to 23S ribosomal RNA and is necessary for the in vitro assembly process of the 50S ribosomal subunit. It is not involved in the protein synthesizing functions of that subunit. The chain is Large ribosomal subunit protein bL20 from Rickettsia rickettsii (strain Iowa).